Reading from the N-terminus, the 347-residue chain is MDDNKKKALAAALGQIEKQFGKGSIMKLGDNRTMDVETVSTGSLSLDIALGAGGLPMGRIVEIYGPESSGKTTLTLEVIAQAQKAGKTCAFIDAEHALDPIYAQKLGVDIDQLLCSQPDTGEQALEIVDALARSGAVDLIVVDSVAALTPKAEIEGEMGDSHMGLQARMLSQAMRKLTGNLKQSNCMCIFINQIRMKIGVMFGNPETTTGGNALKFYASVRLDIRRTGAVKDGDEVVGNETRIKVVKNKIAAPFKQAETQILYGKGFNREGELIDLGVKHKLVDKAGAWYSYNGDKIGQGKANASKFMRENPEIGAELDKKLREMLLTPTEDKPEVVEKIEEENEEF.

65–72 (GPESSGKT) lines the ATP pocket.

The protein belongs to the RecA family.

It localises to the cytoplasm. Can catalyze the hydrolysis of ATP in the presence of single-stranded DNA, the ATP-dependent uptake of single-stranded DNA by duplex DNA, and the ATP-dependent hybridization of homologous single-stranded DNAs. It interacts with LexA causing its activation and leading to its autocatalytic cleavage. The chain is Protein RecA from Aliivibrio salmonicida (strain LFI1238) (Vibrio salmonicida (strain LFI1238)).